A 401-amino-acid polypeptide reads, in one-letter code: Thermophilic serine proteinase (401 aa).

The N-terminal stretch at 1–24 is a signal peptide; sequence MKFKAIVSLSLAVSMSLFPFLVEA. The propeptide occupies 25–121; that stretch reads ASNDGVESPK…AEPNYLFNAA (97 aa). Ca(2+) is bound at residue Asp126. One can recognise a Peptidase S8 domain in the interval 133-399; that stretch reads QYGPQNTYTD…YGRINSYNAV (267 aa). Asp160 functions as the Charge relay system in the catalytic mechanism. Residues Pro168, Asp169, Asp171, Asp179, Asp184, and Asp186 each contribute to the Ca(2+) site. The active-site Charge relay system is His193. The Ca(2+) site is built by Glu204, Asn207, Thr209, and Ile211. An intrachain disulfide couples Cys258 to Cys260. Residues Tyr297, Val300, and Asp323 each contribute to the Na(+) site. Ser347 serves as the catalytic Charge relay system.

It belongs to the peptidase S8 family. It depends on Ca(2+) as a cofactor. Na(+) is required as a cofactor.

It is found in the secreted. The chain is Thermophilic serine proteinase from Bacillus sp. (strain AK1).